Reading from the N-terminus, the 268-residue chain is Zwei Ig domain protein zig-8 (268 aa).

The signal sequence occupies residues 1–21 (MRRFSNICVILFSFLYATGHG). Ig-like C2-type domains follow at residues 40–128 (PSQT…NTVY) and 140–251 (PSPS…NSAT). Residues cysteine 57 and cysteine 118 are joined by a disulfide bond. N-linked (GlcNAc...) asparagine glycosylation is found at asparagine 82, asparagine 155, asparagine 164, and asparagine 191. Cysteine 165 and cysteine 226 form a disulfide bridge.

Expressed in PVT neurons and pharyngeal muscles.

The protein resides in the secreted. Its function is as follows. Together with zig-5, required postembryonically to maintain the position of ASI and ASH head neuron cell bodies and ventral nerve cord axons of PVQ, PVP and HSN neurons by preventing their displacement that could occur during body growth and movement. May act by reducing L1CAM-like protein sax-7 (long isoform) adhesion. This Caenorhabditis elegans protein is Zwei Ig domain protein zig-8.